The primary structure comprises 664 residues: DNA mismatch repair protein MutL (664 aa).

Belongs to the DNA mismatch repair MutL/HexB family.

Functionally, this protein is involved in the repair of mismatches in DNA. It is required for dam-dependent methyl-directed DNA mismatch repair. May act as a 'molecular matchmaker', a protein that promotes the formation of a stable complex between two or more DNA-binding proteins in an ATP-dependent manner without itself being part of a final effector complex. This chain is DNA mismatch repair protein MutL, found in Clostridium beijerinckii (strain ATCC 51743 / NCIMB 8052) (Clostridium acetobutylicum).